Reading from the N-terminus, the 216-residue chain is Small ribosomal subunit protein uS4 (216 aa).

The S4 RNA-binding domain maps to 111 to 175; sequence RRLQTQVLRL…SPLVSESHPE (65 aa). A disordered region spans residues 194–216; sequence VAEAKQAKEKPPERGGRKRRGRR. The segment covering 198 to 208 has biased composition (basic and acidic residues); sequence KQAKEKPPERG.

Belongs to the universal ribosomal protein uS4 family. In terms of assembly, part of the 30S ribosomal subunit. Contacts protein S5. The interaction surface between S4 and S5 is involved in control of translational fidelity.

One of the primary rRNA binding proteins, it binds directly to 16S rRNA where it nucleates assembly of the body of the 30S subunit. Functionally, with S5 and S12 plays an important role in translational accuracy. In Methanosarcina barkeri (strain Fusaro / DSM 804), this protein is Small ribosomal subunit protein uS4.